A 375-amino-acid polypeptide reads, in one-letter code: 2-isopropylmalate synthase (375 aa).

One can recognise a Pyruvate carboxyltransferase domain in the interval 1 to 124 (GRTSIDNLCR…FTNIKHNELY (124 aa)). Mn(2+) is bound by residues His-59, His-61, and Asn-95. The tract at residues 250-375 (QLKYFSIHSG…SKIKNIKNKK (126 aa)) is regulatory domain.

This sequence belongs to the alpha-IPM synthase/homocitrate synthase family. LeuA type 1 subfamily. As to quaternary structure, homodimer.

It localises to the cytoplasm. The catalysed reaction is 3-methyl-2-oxobutanoate + acetyl-CoA + H2O = (2S)-2-isopropylmalate + CoA + H(+). It participates in amino-acid biosynthesis; L-leucine biosynthesis; L-leucine from 3-methyl-2-oxobutanoate: step 1/4. In terms of biological role, catalyzes the condensation of the acetyl group of acetyl-CoA with 3-methyl-2-oxobutanoate (2-ketoisovalerate) to form 3-carboxy-3-hydroxy-4-methylpentanoate (2-isopropylmalate). The sequence is that of 2-isopropylmalate synthase from Buchnera aphidicola subsp. Thelaxes suberi.